The following is a 499-amino-acid chain: Endoglucanase (499 aa).

The N-terminal stretch at 1-29 (MKRSISIFITCLLITLLTMGGMLASPASA) is a signal peptide. Substrate is bound by residues His-65, 69-70 (WY), Tyr-96, and His-131. Glu-169 acts as the Proton donor in catalysis. A substrate-binding site is contributed by Tyr-231. Glu-257 serves as the catalytic Nucleophile. Substrate is bound by residues 263–264 (AS), Trp-291, and 296–298 (KQE). A CBM3 domain is found at 350–499 (QENGISVQYR…GKLIWGTEPN (150 aa)).

This sequence belongs to the glycosyl hydrolase 5 (cellulase A) family.

It catalyses the reaction Endohydrolysis of (1-&gt;4)-beta-D-glucosidic linkages in cellulose, lichenin and cereal beta-D-glucans.. The protein is Endoglucanase (bglC) of Bacillus subtilis.